A 498-amino-acid polypeptide reads, in one-letter code: Succinate-semialdehyde dehydrogenase [NADP(+)] 1 (498 aa).

Position 247–252 (247–252 (GSTNVG)) interacts with NAD(+). Residues Glu-269 and Cys-303 contribute to the active site.

This sequence belongs to the aldehyde dehydrogenase family. As to quaternary structure, homotetramer.

The protein resides in the cytoplasm. It carries out the reaction succinate semialdehyde + NAD(+) + H2O = succinate + NADH + 2 H(+). The catalysed reaction is succinate semialdehyde + NADP(+) + H2O = succinate + NADPH + 2 H(+). It functions in the pathway amino-acid degradation; 4-aminobutanoate degradation. Its function is as follows. Catalyzes the oxidation of succinate semialdehyde to succinate. Can utilize both NAD(+) or NADP(+) as a coenzyme. Functions in a gamma-aminobutyrate (GABA) degradation pathway that allows growth utilizing GABA as a nitrogen source. Functions in the GABA shunt, which allows to bypass 2 reactions in the TCA cycle by removing alpha-ketoglutarate from the cycle and feeding succinate and NADH back into the cycle. In Schizosaccharomyces pombe (strain 972 / ATCC 24843) (Fission yeast), this protein is Succinate-semialdehyde dehydrogenase [NADP(+)] 1 (ssd1).